Reading from the N-terminus, the 157-residue chain is 6,7-dimethyl-8-ribityllumazine synthase (157 aa).

5-amino-6-(D-ribitylamino)uracil contacts are provided by residues Phe-23, 57–59, and 81–83; these read AFE and AVI. Position 86–87 (86–87) interacts with (2S)-2-hydroxy-3-oxobutyl phosphate; it reads ST. His-89 (proton donor) is an active-site residue. Phe-114 contributes to the 5-amino-6-(D-ribitylamino)uracil binding site. Residue Arg-128 participates in (2S)-2-hydroxy-3-oxobutyl phosphate binding.

It belongs to the DMRL synthase family.

The catalysed reaction is (2S)-2-hydroxy-3-oxobutyl phosphate + 5-amino-6-(D-ribitylamino)uracil = 6,7-dimethyl-8-(1-D-ribityl)lumazine + phosphate + 2 H2O + H(+). The protein operates within cofactor biosynthesis; riboflavin biosynthesis; riboflavin from 2-hydroxy-3-oxobutyl phosphate and 5-amino-6-(D-ribitylamino)uracil: step 1/2. Its function is as follows. Catalyzes the formation of 6,7-dimethyl-8-ribityllumazine by condensation of 5-amino-6-(D-ribitylamino)uracil with 3,4-dihydroxy-2-butanone 4-phosphate. This is the penultimate step in the biosynthesis of riboflavin. The polypeptide is 6,7-dimethyl-8-ribityllumazine synthase (Desulfosudis oleivorans (strain DSM 6200 / JCM 39069 / Hxd3) (Desulfococcus oleovorans)).